We begin with the raw amino-acid sequence, 347 residues long: Dihydroorotase (347 aa).

The Zn(2+) site is built by His17 and His19. Substrate is bound by residues 19–21 (HLR) and Asn45. Residues Lys103, His140, and His178 each contribute to the Zn(2+) site. N6-carboxylysine is present on Lys103. His140 contributes to the substrate binding site. Leu223 serves as a coordination point for substrate. Asp251 lines the Zn(2+) pocket. Asp251 is an active-site residue. His255 and Ala267 together coordinate substrate.

Belongs to the metallo-dependent hydrolases superfamily. DHOase family. Class II DHOase subfamily. In terms of assembly, homodimer. Zn(2+) is required as a cofactor.

It carries out the reaction (S)-dihydroorotate + H2O = N-carbamoyl-L-aspartate + H(+). It functions in the pathway pyrimidine metabolism; UMP biosynthesis via de novo pathway; (S)-dihydroorotate from bicarbonate: step 3/3. Functionally, catalyzes the reversible cyclization of carbamoyl aspartate to dihydroorotate. The polypeptide is Dihydroorotase (Citrobacter koseri (strain ATCC BAA-895 / CDC 4225-83 / SGSC4696)).